A 163-amino-acid polypeptide reads, in one-letter code: Nucleotide-binding protein YajQ (163 aa).

The protein belongs to the YajQ family.

In terms of biological role, nucleotide-binding protein. The polypeptide is Nucleotide-binding protein YajQ (Escherichia coli (strain K12 / DH10B)).